Consider the following 213-residue polypeptide: Coiled-coil domain-containing protein 43 (213 aa).

Residues 119 to 206 (RKEAVLAQYA…ERKDKEKKRT (88 aa)) adopt a coiled-coil conformation. The segment at 127 to 213 (YANVTDDEDE…KRTQKGERKR (87 aa)) is disordered. Positions 131–142 (TDDEDEAEEEEQ) are enriched in acidic residues. Over residues 169 to 200 (QRDQAKEDAQKKKEQDKMQREKDKLSKQERKD) the composition is skewed to basic and acidic residues. Positions 201–213 (KEKKRTQKGERKR) are enriched in basic residues.

It belongs to the CCDC43 family.

The protein is Coiled-coil domain-containing protein 43 (ccdc43) of Danio rerio (Zebrafish).